A 133-amino-acid chain; its full sequence is C-C motif chemokine 21a (133 aa).

Residues 1–23 (MAQMMTLSLLSLVLALCIPWTQG) form the signal peptide. 3 cysteine pairs are disulfide-bonded: Cys31/Cys57, Cys32/Cys75, and Cys103/Cys122. The disordered stretch occupies residues 86–133 (LMRRLDQPPAPGKQSPGCRKNRGTSKSGKKGKGSKGCKRTEQTQPSRG). The segment at 98-133 (KQSPGCRKNRGTSKSGKKGKGSKGCKRTEQTQPSRG) is C-terminal basic extension. The segment covering 104–122 (RKNRGTSKSGKKGKGSKGC) has biased composition (basic residues).

Belongs to the intercrine beta (chemokine CC) family. In terms of assembly, binds to CCR7 and to CXCR3. Interacts with PDPN; relocalizes PDPN to the basolateral membrane. Interacts with GPR174. Expressed strongly in lung, spleen, thymus, peripheral and mesentric lymph nodes. Also expressed in the testis, kidney, liver, and heart.

It is found in the secreted. Functionally, inhibits hemopoiesis and stimulates chemotaxis. Chemotactic in vitro for thymocytes and activated T-cells, but not for B-cells, macrophages, or neutrophils. Potent mesangial cell chemoattractant. Shows preferential activity towards naive T-cells. May play a role in mediating homing of lymphocytes to secondary lymphoid organs. This is C-C motif chemokine 21a (Ccl21a) from Mus musculus (Mouse).